Here is a 556-residue protein sequence, read N- to C-terminus: Glutamine--tRNA ligase (556 aa).

The short motif at 35-45 (PEPNGYLHIGH) is the 'HIGH' region element. ATP contacts are provided by residues 36 to 38 (EPN) and 42 to 48 (HIGHAKS). L-glutamine contacts are provided by aspartate 68 and tyrosine 213. ATP is bound by residues threonine 232 and 262-263 (RL). The 'KMSKS' region motif lies at 269–273 (VTSKR).

It belongs to the class-I aminoacyl-tRNA synthetase family. In terms of assembly, monomer.

The protein resides in the cytoplasm. The catalysed reaction is tRNA(Gln) + L-glutamine + ATP = L-glutaminyl-tRNA(Gln) + AMP + diphosphate. This Pseudomonas aeruginosa (strain ATCC 15692 / DSM 22644 / CIP 104116 / JCM 14847 / LMG 12228 / 1C / PRS 101 / PAO1) protein is Glutamine--tRNA ligase.